The following is a 462-amino-acid chain: Glycine--tRNA ligase (462 aa).

Arg-100 and Glu-174 together coordinate substrate. ATP is bound by residues 206 to 208, 216 to 221, 290 to 291, and 334 to 337; these read RNE, FRTREF, EL, and GADR. Position 221 to 225 (221 to 225) interacts with substrate; it reads FEQME. A substrate-binding site is contributed by 330–334; the sequence is EPSLG.

Belongs to the class-II aminoacyl-tRNA synthetase family. In terms of assembly, homodimer.

The protein resides in the cytoplasm. The catalysed reaction is tRNA(Gly) + glycine + ATP = glycyl-tRNA(Gly) + AMP + diphosphate. Functionally, catalyzes the attachment of glycine to tRNA(Gly). The sequence is that of Glycine--tRNA ligase from Alkaliphilus metalliredigens (strain QYMF).